A 383-amino-acid polypeptide reads, in one-letter code: MAFLSLPSDVVEEFLFKTPIESLVLCKPTCKQLYALCNDKRFIYNHLDLSEERLMRIYLDKIKIINPVTLDILCLPVPAEFDSVTFNVIHCDGLLLCRWTTRGLDRYNKLAVWNPISGQLKFVESFFHGVTDLYGFGYANNGPRDSYKILRVSYWRKECEIYDLKSKLWRAFSATLDWVVNTPQQNVFMNGNMYWIADTLGDNIRETFIQSFDFSKETFKPICSFPYENKIIDTLIMNGIHRIADSVILSSFRVDRLSLFRQQRLEDKKYEMEVWVTNKVTDEVVSWTKYFNVTHHPDLPILNPYLFTYMRVPTFFIHETNSIMLWCDKAAGKGFACTSFYEIGDQGEVKHQLETRKRFRANGERNSCVSSCVYVPSLVPIPE.

The F-box domain occupies 1–47 (MAFLSLPSDVVEEFLFKTPIESLVLCKPTCKQLYALCNDKRFIYNHL).

This is Putative F-box protein At1g77650 from Arabidopsis thaliana (Mouse-ear cress).